Reading from the N-terminus, the 435-residue chain is Methylenetetrahydrofolate--tRNA-(uracil-5-)-methyltransferase TrmFO (435 aa).

7-12 (GAGLAG) contacts FAD.

The protein belongs to the MnmG family. TrmFO subfamily. FAD serves as cofactor.

It localises to the cytoplasm. It carries out the reaction uridine(54) in tRNA + (6R)-5,10-methylene-5,6,7,8-tetrahydrofolate + NADH + H(+) = 5-methyluridine(54) in tRNA + (6S)-5,6,7,8-tetrahydrofolate + NAD(+). It catalyses the reaction uridine(54) in tRNA + (6R)-5,10-methylene-5,6,7,8-tetrahydrofolate + NADPH + H(+) = 5-methyluridine(54) in tRNA + (6S)-5,6,7,8-tetrahydrofolate + NADP(+). Its function is as follows. Catalyzes the folate-dependent formation of 5-methyl-uridine at position 54 (M-5-U54) in all tRNAs. The chain is Methylenetetrahydrofolate--tRNA-(uracil-5-)-methyltransferase TrmFO from Thermotoga sp. (strain RQ2).